Consider the following 202-residue polypeptide: uncharacterized protein (202 aa).

This is an uncharacterized protein from Saccharomyces cerevisiae (strain ATCC 204508 / S288c) (Baker's yeast).